We begin with the raw amino-acid sequence, 88 residues long: MPNIKSAIKRVKTNEKRRAQNAAQKSALRTAVKHFETAAANGDVEKAQAAFVEASKKLDKAATKGLIHKNAASRQKSRLAKKLNGLSA.

Disordered regions lie at residues 1-22 (MPNI…AQNA) and 69-88 (KNAA…GLSA).

Belongs to the bacterial ribosomal protein bS20 family.

Functionally, binds directly to 16S ribosomal RNA. This Shouchella clausii (strain KSM-K16) (Alkalihalobacillus clausii) protein is Small ribosomal subunit protein bS20.